Consider the following 1010-residue polypeptide: Lysosomal alpha-mannosidase (1010 aa).

A signal peptide spans 1–22 (MVIKKLFILIFCLFLIINEING). Residues 23–40 (KKTKINDIKKSKPKLSST) constitute a propeptide, pro I. The Zn(2+) site is built by H51 and D53. A glycan (N-linked (GlcNAc...) asparagine) is linked at N68. D173 and H420 together coordinate Zn(2+). The active-site Nucleophile is D173. N-linked (GlcNAc...) asparagine glycosylation is found at N480, N520, N528, N539, N623, N760, N784, N828, N954, and N963. A propeptide spans 508–595 (RNEPVRIPIP…GGGKINEKVS (88 aa)) (pro II).

The protein belongs to the glycosyl hydrolase 38 family. In terms of assembly, tetramer of equimolar amounts of 60 and 58 kDa subunits. Requires Zn(2+) as cofactor. In terms of processing, first cleaved into the mature 58 kDa subunit and an intermediate 82 kDa subunit. The latter is then cleaved to its mature 60 kDa subunit form. These events occur in multiple intracellular compartments. The 60 kDa subunit may form one or more intramolecular disulfide bonds.

The protein resides in the lysosome. The enzyme catalyses Hydrolysis of terminal, non-reducing alpha-D-mannose residues in alpha-D-mannosides.. In Dictyostelium discoideum (Social amoeba), this protein is Lysosomal alpha-mannosidase (manA).